Consider the following 516-residue polypeptide: Multicopper oxidase CueO (516 aa).

The tat-type signal signal peptide spans 1–28 (MQRRDFLKYSVALGVASALPLWSRAVFA). 3 Plastocyanin-like domains span residues 55–165 (GQST…IEDD), 227–292 (PRGW…DNKP), and 399–516 (GGKF…GFTV). Cu cation-binding residues include histidine 101, histidine 103, histidine 141, and histidine 143. Cu cation contacts are provided by histidine 443, histidine 446, histidine 448, histidine 499, cysteine 500, histidine 501, and histidine 505.

Belongs to the multicopper oxidase family. In terms of assembly, monomer. Cu cation serves as cofactor. In terms of processing, predicted to be exported by the Tat system. The position of the signal peptide cleavage has not been experimentally proven.

The protein resides in the periplasm. It catalyses the reaction 4 Cu(+) + O2 + 4 H(+) = 4 Cu(2+) + 2 H2O. Multicopper oxidase involved in copper homeostasis and copper tolerance under aerobic conditions. Is responsible for the oxidation of Cu(+) to the less harmful Cu(2+) in the periplasm, thereby preventing Cu(+) from entering the cytoplasm. The polypeptide is Multicopper oxidase CueO (cueO) (Escherichia coli O157:H7).